The primary structure comprises 98 residues: NADH-ubiquinone oxidoreductase chain 4L (98 aa).

Helical transmembrane passes span 2-22, 29-49, and 61-81; these read PSISININLAFATALLGMLMF, SLLCLEGMMLSMFILSTLTIL, and ILLLVFAACEAAIGLALLVMV.

It belongs to the complex I subunit 4L family. In terms of assembly, core subunit of respiratory chain NADH dehydrogenase (Complex I) which is composed of 45 different subunits.

Its subcellular location is the mitochondrion inner membrane. The catalysed reaction is a ubiquinone + NADH + 5 H(+)(in) = a ubiquinol + NAD(+) + 4 H(+)(out). Its function is as follows. Core subunit of the mitochondrial membrane respiratory chain NADH dehydrogenase (Complex I) which catalyzes electron transfer from NADH through the respiratory chain, using ubiquinone as an electron acceptor. Part of the enzyme membrane arm which is embedded in the lipid bilayer and involved in proton translocation. This is NADH-ubiquinone oxidoreductase chain 4L (MT-ND4L) from Microcebus simmonsi (Simmons's mouse lemur).